The primary structure comprises 132 residues: Ribosome-binding factor A (132 aa).

The protein belongs to the RbfA family. Monomer. Binds 30S ribosomal subunits, but not 50S ribosomal subunits or 70S ribosomes.

Its subcellular location is the cytoplasm. In terms of biological role, one of several proteins that assist in the late maturation steps of the functional core of the 30S ribosomal subunit. Associates with free 30S ribosomal subunits (but not with 30S subunits that are part of 70S ribosomes or polysomes). Required for efficient processing of 16S rRNA. May interact with the 5'-terminal helix region of 16S rRNA. The sequence is that of Ribosome-binding factor A from Burkholderia multivorans (strain ATCC 17616 / 249).